Consider the following 342-residue polypeptide: S-adenosylmethionine:tRNA ribosyltransferase-isomerase (342 aa).

The protein belongs to the QueA family. As to quaternary structure, monomer.

It is found in the cytoplasm. The enzyme catalyses 7-aminomethyl-7-carbaguanosine(34) in tRNA + S-adenosyl-L-methionine = epoxyqueuosine(34) in tRNA + adenine + L-methionine + 2 H(+). Its pathway is tRNA modification; tRNA-queuosine biosynthesis. Functionally, transfers and isomerizes the ribose moiety from AdoMet to the 7-aminomethyl group of 7-deazaguanine (preQ1-tRNA) to give epoxyqueuosine (oQ-tRNA). The polypeptide is S-adenosylmethionine:tRNA ribosyltransferase-isomerase (Streptococcus agalactiae serotype V (strain ATCC BAA-611 / 2603 V/R)).